The chain runs to 531 residues: Doublesex- and mab-3-related transcription factor A2 (531 aa).

The segment at residues 69–116 (CARCRNHGVVSALKGHKRYCRWKDCLCAKCTLIAERQRVMAAQVALRR) is a DNA-binding region (DM). Residues 197–312 (LQAGRPDSPQ…GGPGPRQRTP (116 aa)) are disordered. Low complexity predominate over residues 274–285 (PGSSSPLGSESG). One can recognise a DMA domain in the interval 310-345 (RTPLDILTRVFPGHRRGVLELVLQGCGGDVVQAIEQ).

It belongs to the DMRT family. As to expression, expressed in adult brain and testis, as well as in embryonic ovary, kidney, heart, lung, stomach and brain.

Its subcellular location is the nucleus. Functionally, may be involved in sexual development. The chain is Doublesex- and mab-3-related transcription factor A2 (Dmrta2) from Mus musculus (Mouse).